A 280-amino-acid polypeptide reads, in one-letter code: Phosphatidylglycerol--prolipoprotein diacylglyceryl transferase (280 aa).

A run of 4 helical transmembrane segments spans residues 23–43 (LRWY…LAGV), 58–78 (LLFW…VLFY), 93–113 (IWTG…ALWW), and 120–140 (CTFL…LGAG). Arg-141 provides a ligand contact to a 1,2-diacyl-sn-glycero-3-phospho-(1'-sn-glycerol). The next 3 helical transmembrane spans lie at 173–193 (PSQL…LWLY), 200–220 (IGAV…FVEF), and 241–261 (QGQI…VWAV).

It belongs to the Lgt family.

It localises to the cell inner membrane. It catalyses the reaction L-cysteinyl-[prolipoprotein] + a 1,2-diacyl-sn-glycero-3-phospho-(1'-sn-glycerol) = an S-1,2-diacyl-sn-glyceryl-L-cysteinyl-[prolipoprotein] + sn-glycerol 1-phosphate + H(+). The protein operates within protein modification; lipoprotein biosynthesis (diacylglyceryl transfer). Catalyzes the transfer of the diacylglyceryl group from phosphatidylglycerol to the sulfhydryl group of the N-terminal cysteine of a prolipoprotein, the first step in the formation of mature lipoproteins. The sequence is that of Phosphatidylglycerol--prolipoprotein diacylglyceryl transferase from Pseudoalteromonas atlantica (strain T6c / ATCC BAA-1087).